Here is a 181-residue protein sequence, read N- to C-terminus: MIKEVIVVEGRDDITAVKRAVDAEMIAVGGFGINSKVIKKIREAQKRQGVIVLTDPDYAGEKIRKYICNRVKGVKHAYISQEEGTKEDDIGVENAAPEAIIRALNLAKCEVKQERKEFDMNDMIFFKLTANEESKERREKLGMALGIGYCNTNQFIKRLNNFGITKEEFIKAIKDLDKGNE.

Residues Lys-3–Lys-86 form the Toprim domain. The Mg(2+) site is built by Glu-9, Asp-55, and Asp-57.

The protein belongs to the ribonuclease M5 family. Mg(2+) serves as cofactor.

It is found in the cytoplasm. It catalyses the reaction Endonucleolytic cleavage of RNA, removing 21 and 42 nucleotides, respectively, from the 5'- and 3'-termini of a 5S-rRNA precursor.. Required for correct processing of both the 5' and 3' ends of 5S rRNA precursor. Cleaves both sides of a double-stranded region yielding mature 5S rRNA in one step. The polypeptide is Ribonuclease M5 (Clostridium botulinum (strain Hall / ATCC 3502 / NCTC 13319 / Type A)).